The chain runs to 622 residues: Probable ATP-dependent RNA helicase DDX41 (622 aa).

Residues 1 to 15 show a composition bias toward basic and acidic residues; it reads MEDSEPERKRARADE. 2 disordered regions span residues 1-39 and 51-84; these read MEDS…YVPL and LQRR…PQSN. A Phosphoserine modification is found at Ser-4. N6-acetyllysine is present on Lys-9. A Glycyl lysine isopeptide (Lys-Gly) (interchain with G-Cter in ubiquitin) cross-link involves residue Lys-9. Phosphoserine occurs at positions 21 and 23. Over residues 24–33 the composition is skewed to acidic residues; sequence EDEDEDDEDY. Tyr-33 carries the phosphotyrosine modification. Residue Lys-115 forms a Glycyl lysine isopeptide (Lys-Gly) (interchain with G-Cter in ubiquitin) linkage. Positions 181–209 match the Q motif motif; that stretch reads KSFKEMKFPAAILRGLKKKGILHPTPIQI. Residues 212 to 396 enclose the Helicase ATP-binding domain; the sequence is IPTILSGRDM…KSALVKPVTI (185 aa). An ATP-binding site is contributed by 225 to 232; sequence AFTGSGKT. The DEAD box motif lies at 344–347; it reads DEAD. A Helicase C-terminal domain is found at 407–567; the sequence is DVIQEVEYVK…KVPPVLQVLH (161 aa). Phosphotyrosine is present on Tyr-414. Residues Lys-416 and Lys-442 each participate in a glycyl lysine isopeptide (Lys-Gly) (interchain with G-Cter in SUMO2) cross-link. The CCHC-type zinc-finger motif lies at 580 to 597; that stretch reads RGCAFCGGLGHRITDCPK.

The protein belongs to the DEAD box helicase family. DDX41 subfamily. In terms of assembly, identified in the spliceosome C complex. Interacts with ERCC6. Interacts with FAM50A. Interacts with STING1. Interacts with CGAS. Interacts with several spliceosomes components such as PRP19 or CDC5L. Post-translationally, acetylation at Lys-9 regulates the nuclear/cytoplasmic localization. Phosphorylated by BTK; phosphorylation induces binding to dsDNA and STING1. In terms of processing, 'Lys-48'-linked ubiquitinated and degraded by TRIM21 leading to negative regulation of the innate immune response to intracellular dsDNA.

It is found in the nucleus. The protein resides in the cytoplasm. The enzyme catalyses ATP + H2O = ADP + phosphate + H(+). Functionally, multifunctional protein that participates in many aspects of cellular RNA metabolism. Plays pivotal roles in innate immune sensing and hematopoietic homeostasis. Recognizes foreign or self-nucleic acids generated during microbial infection, thereby initiating anti-pathogen responses. Mechanistically, phosphorylation by BTK allows binding to dsDNA leading to interaction with STING1. Modulates the homeostasis of dsDNA through its ATP-dependent DNA-unwinding activity and ATP-independent strand-annealing activity. In turn, induces STING1-mediated type I interferon and cytokine responses to DNA and DNA viruses. During murine leukemia virus infection, primarily senses the DNA/RNA hybrid generated at the first step of reverse transcription, while cGAS recognizes dsDNA generated at the next step and both are needed for the antiretroviral innate immune response. Selectively modulates the transcription of certain immunity-associated genes by regulating their alternative splicing. Binds to RNA (R)-loops, structures consisting of DNA/RNA hybrids and a displaced strand of DNA that occur during transcription, and prevents their accumulation, thereby maintaining genome stability. Also participates in pre-mRNA splicing, translational regulation and snoRNA processing, which is essential for ribosome biogenesis. The polypeptide is Probable ATP-dependent RNA helicase DDX41 (Ddx41) (Mus musculus (Mouse)).